The primary structure comprises 719 residues: Phosphoribosylformylglycinamidine synthase subunit PurL (719 aa).

His-47 is an active-site residue. ATP-binding residues include Tyr-50 and Lys-89. Glu-91 is a binding site for Mg(2+). Residues 92–95 (SHNH) and Arg-114 contribute to the substrate site. The Proton acceptor role is filled by His-93. Position 115 (Asp-115) interacts with Mg(2+). Gln-238 is a substrate binding site. Asp-266 serves as a coordination point for Mg(2+). 310–312 (ESQ) lines the substrate pocket. ATP contacts are provided by Asp-488 and Gly-525. Asn-526 provides a ligand contact to Mg(2+). Ser-528 lines the substrate pocket.

This sequence belongs to the FGAMS family. In terms of assembly, monomer. Part of the FGAM synthase complex composed of 1 PurL, 1 PurQ and 2 PurS subunits.

It is found in the cytoplasm. The enzyme catalyses N(2)-formyl-N(1)-(5-phospho-beta-D-ribosyl)glycinamide + L-glutamine + ATP + H2O = 2-formamido-N(1)-(5-O-phospho-beta-D-ribosyl)acetamidine + L-glutamate + ADP + phosphate + H(+). Its pathway is purine metabolism; IMP biosynthesis via de novo pathway; 5-amino-1-(5-phospho-D-ribosyl)imidazole from N(2)-formyl-N(1)-(5-phospho-D-ribosyl)glycinamide: step 1/2. Its function is as follows. Part of the phosphoribosylformylglycinamidine synthase complex involved in the purines biosynthetic pathway. Catalyzes the ATP-dependent conversion of formylglycinamide ribonucleotide (FGAR) and glutamine to yield formylglycinamidine ribonucleotide (FGAM) and glutamate. The FGAM synthase complex is composed of three subunits. PurQ produces an ammonia molecule by converting glutamine to glutamate. PurL transfers the ammonia molecule to FGAR to form FGAM in an ATP-dependent manner. PurS interacts with PurQ and PurL and is thought to assist in the transfer of the ammonia molecule from PurQ to PurL. The sequence is that of Phosphoribosylformylglycinamidine synthase subunit PurL from Jannaschia sp. (strain CCS1).